Consider the following 673-residue polypeptide: Armadillo repeat-containing protein 8 (673 aa).

Ala2 bears the N-acetylalanine mark. 14 ARM repeats span residues 51–92 (NKQK…SLAM), 95–134 (ENNV…TIFT), 138–176 (TPEE…HCCK), 178–217 (PDHQ…VLAF), 224–265 (MTLV…YMCR), 269–309 (IRTD…YLIE), 313–352 (ELQR…HDLK), 374–413 (DIRK…SLSR), 416–455 (QQLR…NLLL), 458–497 (SPSK…NMAF), 501–540 (QKIK…NLLS), 543–585 (PHID…NIAD), 588–627 (TAKE…NLTW), and 634–673 (QERQ…QYLA). Phosphoserine is present on Ser337. At Ser512 the chain carries Phosphoserine.

Identified in the CTLH complex that contains GID4, RANBP9 and/or RANBP10, MKLN1, MAEA, RMND5A (or alternatively its paralog RMND5B), GID8, ARMC8, WDR26 and YPEL5. Within this complex, MAEA, RMND5A (or alternatively its paralog RMND5B), GID8, WDR26, and RANBP9 and/or RANBP10 form the catalytic core, while GID4, MKLN1, ARMC8 and YPEL5 have ancillary roles.

It localises to the nucleus. The protein resides in the cytoplasm. Functionally, component of the CTLH E3 ubiquitin-protein ligase complex that selectively accepts ubiquitin from UBE2H and mediates ubiquitination and subsequent proteasomal degradation of the transcription factor HBP1. This Mus musculus (Mouse) protein is Armadillo repeat-containing protein 8 (Armc8).